The primary structure comprises 232 residues: Large ribosomal subunit protein uL1 (232 aa).

It belongs to the universal ribosomal protein uL1 family. In terms of assembly, part of the 50S ribosomal subunit.

Its function is as follows. Binds directly to 23S rRNA. The L1 stalk is quite mobile in the ribosome, and is involved in E site tRNA release. In terms of biological role, protein L1 is also a translational repressor protein, it controls the translation of the L11 operon by binding to its mRNA. The polypeptide is Large ribosomal subunit protein uL1 (Clostridium novyi (strain NT)).